The sequence spans 365 residues: Membrane-bound lytic murein transglycosylase C (365 aa).

Residues 1-19 form the signal peptide; the sequence is MKKYTKYLPLLLIIPFLAA. C20 is lipidated: N-palmitoyl cysteine. C20 carries the S-diacylglycerol cysteine lipid modification.

This sequence belongs to the transglycosylase Slt family.

The protein resides in the cell outer membrane. It catalyses the reaction Exolytic cleavage of the (1-&gt;4)-beta-glycosidic linkage between N-acetylmuramic acid (MurNAc) and N-acetylglucosamine (GlcNAc) residues in peptidoglycan, from either the reducing or the non-reducing ends of the peptidoglycan chains, with concomitant formation of a 1,6-anhydrobond in the MurNAc residue.. Its function is as follows. Murein-degrading enzyme. May play a role in recycling of muropeptides during cell elongation and/or cell division. The polypeptide is Membrane-bound lytic murein transglycosylase C (Actinobacillus pleuropneumoniae serotype 5b (strain L20)).